The primary structure comprises 328 residues: dTDP-4-dehydrorhamnose 3,5-epimerase (328 aa).

Residues R23, E28, 46-48, and R58 each bind substrate; that span reads QEN. Residue H61 is the Proton acceptor of the active site. Residues K70 and H117 each coordinate substrate. Catalysis depends on Y130, which acts as the Proton donor. 2 residues coordinate substrate: E141 and K166.

Belongs to the dTDP-4-dehydrorhamnose 3,5-epimerase family. Homodimer.

It catalyses the reaction dTDP-4-dehydro-6-deoxy-alpha-D-glucose = dTDP-4-dehydro-beta-L-rhamnose. It participates in carbohydrate biosynthesis; dTDP-L-rhamnose biosynthesis. Its pathway is bacterial outer membrane biogenesis; LPS O-antigen biosynthesis. Its function is as follows. Catalyzes the epimerization of the C3' and C5'positions of dTDP-6-deoxy-D-xylo-4-hexulose, forming dTDP-6-deoxy-L-lyxo-4-hexulose. This is dTDP-4-dehydrorhamnose 3,5-epimerase (rfbC) from Neisseria gonorrhoeae.